Consider the following 291-residue polypeptide: Oxidative stress-responsive serine-rich protein 1 (291 aa).

The interval E48–A174 is disordered. Residues S65–K83 show a composition bias toward basic residues. Residues E132–T142 show a composition bias toward polar residues. Phosphothreonine occurs at positions 142 and 232.

This chain is Oxidative stress-responsive serine-rich protein 1 (OSER1), found in Bos taurus (Bovine).